We begin with the raw amino-acid sequence, 353 residues long: Tetraacyldisaccharide 4'-kinase (353 aa).

66 to 73 (TVGGTGKT) serves as a coordination point for ATP.

It belongs to the LpxK family.

It carries out the reaction a lipid A disaccharide + ATP = a lipid IVA + ADP + H(+). The protein operates within glycolipid biosynthesis; lipid IV(A) biosynthesis; lipid IV(A) from (3R)-3-hydroxytetradecanoyl-[acyl-carrier-protein] and UDP-N-acetyl-alpha-D-glucosamine: step 6/6. Transfers the gamma-phosphate of ATP to the 4'-position of a tetraacyldisaccharide 1-phosphate intermediate (termed DS-1-P) to form tetraacyldisaccharide 1,4'-bis-phosphate (lipid IVA). In Geobacter sulfurreducens (strain ATCC 51573 / DSM 12127 / PCA), this protein is Tetraacyldisaccharide 4'-kinase.